We begin with the raw amino-acid sequence, 174 residues long: Large ribosomal subunit protein uL10 (174 aa).

Belongs to the universal ribosomal protein uL10 family. Part of the ribosomal stalk of the 50S ribosomal subunit. The N-terminus interacts with L11 and the large rRNA to form the base of the stalk. The C-terminus forms an elongated spine to which L12 dimers bind in a sequential fashion forming a multimeric L10(L12)X complex.

Its function is as follows. Forms part of the ribosomal stalk, playing a central role in the interaction of the ribosome with GTP-bound translation factors. This chain is Large ribosomal subunit protein uL10, found in Methylibium petroleiphilum (strain ATCC BAA-1232 / LMG 22953 / PM1).